Reading from the N-terminus, the 301-residue chain is Glycine--tRNA ligase alpha subunit (301 aa).

It belongs to the class-II aminoacyl-tRNA synthetase family. Tetramer of two alpha and two beta subunits.

It localises to the cytoplasm. It carries out the reaction tRNA(Gly) + glycine + ATP = glycyl-tRNA(Gly) + AMP + diphosphate. The protein is Glycine--tRNA ligase alpha subunit of Shewanella frigidimarina (strain NCIMB 400).